The following is a 422-amino-acid chain: UPF0761 membrane protein Paes_1471 (422 aa).

Transmembrane regions (helical) follow at residues 47–67 (LLSI…SPVF), 103–123 (SVPT…ISTI), 143–163 (FTLY…SLVA), 185–205 (LLLL…ILVP), 208–228 (KVKF…FEFS), and 247–267 (GALS…VVAL).

The protein belongs to the UPF0761 family.

The protein localises to the cell inner membrane. This Prosthecochloris aestuarii (strain DSM 271 / SK 413) protein is UPF0761 membrane protein Paes_1471.